The primary structure comprises 423 residues: Sulfate adenylyltransferase (423 aa).

It belongs to the sulfate adenylyltransferase family.

The enzyme catalyses sulfate + ATP + H(+) = adenosine 5'-phosphosulfate + diphosphate. Its pathway is sulfur metabolism; hydrogen sulfide biosynthesis; sulfite from sulfate: step 1/3. This chain is Sulfate adenylyltransferase, found in Desulfovibrio desulfuricans (strain ATCC 27774 / DSM 6949 / MB).